The primary structure comprises 229 residues: Uracil-DNA glycosylase (229 aa).

The Proton acceptor role is filled by Asp70.

Belongs to the uracil-DNA glycosylase (UDG) superfamily. UNG family.

It is found in the cytoplasm. The catalysed reaction is Hydrolyzes single-stranded DNA or mismatched double-stranded DNA and polynucleotides, releasing free uracil.. Its function is as follows. Excises uracil residues from the DNA which can arise as a result of misincorporation of dUMP residues by DNA polymerase or due to deamination of cytosine. The polypeptide is Uracil-DNA glycosylase (Chlamydia felis (strain Fe/C-56) (Chlamydophila felis)).